The following is a 229-amino-acid chain: Large ribosomal subunit protein uL1 (229 aa).

Belongs to the universal ribosomal protein uL1 family. Part of the 50S ribosomal subunit.

Binds directly to 23S rRNA. The L1 stalk is quite mobile in the ribosome, and is involved in E site tRNA release. Its function is as follows. Protein L1 is also a translational repressor protein, it controls the translation of the L11 operon by binding to its mRNA. The sequence is that of Large ribosomal subunit protein uL1 from Gemmatimonas aurantiaca (strain DSM 14586 / JCM 11422 / NBRC 100505 / T-27).